We begin with the raw amino-acid sequence, 444 residues long: E1B 55 kDa protein (444 aa).

The disordered stretch occupies residues 1-35 (MEQNADMEPDRQVNQRPPRFRARGAGVRGRGRVRR). Ser438 and Ser439 each carry phosphoserine.

Belongs to the adenoviridae E1B 55 kDa protein family. Interacts with host PML-4 and PML-5; this interaction promotes efficient subnuclear targeting of E1B-55K to PML nuclear bodies. Interacts with E4-ORF3 protein. Interacts with E4-ORF6 protein.

It is found in the host nucleus. The protein resides in the host cytoplasm. In terms of biological role, plays a major role to prevent cellular inhibition of viral genome replication. Assembles an SCF-like E3 ubiquitin ligase complex based on the cellular proteins ELOB, ELOC, CUL5 and RBX1, in cooperation with viral E4orf6. This viral RING-type ligase ubiquitinates cellular substrates and targets them to proteasomal degradation: TP53/p53, LIG4, MRE11-RAD50-NBS1 (MRN) complex, ITGA3, DAXX and BLM. E1B-55K probably acts as the substrate-specific adapter of the SCF-like E3 ubiquitin ligase complex. Degradation of host TP53/p53 activity is essential for preventing E1A-induced TP53 accumulation that would otherwise lead to cell apoptosis and growth arrest. E1B-55K also inactivates TP53 transcription-factor activity by binding its transactivation domain. E1B-55K also functions as a SUMO1 E3 ligase for TP53 which causes the latter to be sequestered in promyelocytic leukemia (PML) nuclear bodies thereby contributing to maximal inhibition of TP53 function. The protein is E1B 55 kDa protein of Canis lupus familiaris (Dog).